A 64-amino-acid polypeptide reads, in one-letter code: Micrurotoxin 1 (64 aa).

Intrachain disulfides connect cysteine 3/cysteine 24, cysteine 6/cysteine 11, cysteine 17/cysteine 41, cysteine 45/cysteine 57, and cysteine 58/cysteine 63.

The protein belongs to the three-finger toxin family. Ancestral subfamily. Expressed by the venom gland.

The protein localises to the secreted. Allosteric modulator of the GABA(A) receptor (GABR), possibly increasing receptor affinity for the agonist, thus enhancing receptor opening and macroscopic desensitization. In vivo, intracerebroventricular injection into mice results in periods of reduced basal activity, followed by bursts of intense seizures and death. The protein is Micrurotoxin 1 of Micrurus mipartitus (Red-tailed coral snake).